Here is a 476-residue protein sequence, read N- to C-terminus: S-adenosylmethionine-dependent nucleotide dehydratase (476 aa).

The segment at Met-1 to Ile-168 is cytidylate kinase-like domain. Residue Gly-9 to Thr-17 participates in ATP binding. The Radical SAM core domain maps to Asn-176 to Glu-400. The tract at residues Ser-183 to Glu-476 is prokaryotic viperin domain. [4Fe-4S] cluster is bound by residues Cys-192, Cys-196, and Cys-199.

This sequence in the N-terminal section; belongs to the cytidylate kinase-like family. The protein in the C-terminal section; belongs to the radical SAM superfamily. Viperin family. It depends on [4Fe-4S] cluster as a cofactor.

It catalyses the reaction GTP + AH2 + S-adenosyl-L-methionine = 3'-deoxy-3',4'-didehydro-GTP + 5'-deoxyadenosine + L-methionine + A + H2O + H(+). Expression of pVip60 in E.coli (strain MG1655) confers resistance to phage T7; prevents culture collapse upon infection. Catalyzes the conversion of guanosine triphosphate (GTP) to 3'-deoxy-3',4'-didehydro-GTP (ddhGTP), probably via a SAM-dependent radical mechanism. The modified nucleotide represses transcription from T7 RNA polymerase-directed genes (possibly by acting as chain terminators), strongly suggesting these nucleotides block viral polymerase transcription. Functionally, the N-terminus of the protein may generate NTP for use by the viperin domain. This is S-adenosylmethionine-dependent nucleotide dehydratase from Lacinutrix mariniflava (strain JCM 13824 / KCCM 42306 / AKS432).